The following is a 452-amino-acid chain: MKLLSRAGSFSRFYSLKVAPKLKTSAPGGVPLQPQELEFTKLPNGLVIASLENYAPLSRIGLFIKAGSRYENYNYLGTSHLLRLASTLTTKGASSFKITRGIEAVGGKLSVTATRENMAYTVEGIRDDIEILMEFLLNVTTAPEFRRWEVAALRSQLKIDKAVAFQNPQTRIIENLHDVAYKNALANPLYCPDYRMGKITSEELHYFVQNHFTSARMALVGLGVSHSILKEVAEQFLNIRGGLGLAGAKAKYRGGEIREQNGDNLVHAAIVAESAAIGNAEANAFSVLQHLLGAGPHIKRGNNTTSLLSQSVAKGSQQPFDVSAFNASYSDSGLFGIYTVSQAAAAGDVINAAYNQVKAVAQGNLSSADVQAAKNKLKAGYLMSVETSEGFLSEIGSQALATGSYMPPPTVLQQIDAVADADVVKAAKKFVSGKKSMTASGNLGHTPFLDEL.

The N-terminal 14 residues, 1 to 14 (MKLLSRAGSFSRFY), are a transit peptide targeting the mitochondrion. Lys-65, Lys-198, and Lys-249 each carry N6-acetyllysine. Ser-367 bears the Phosphoserine mark.

Belongs to the peptidase M16 family. UQCRC2/QCR2 subfamily. As to quaternary structure, component of the ubiquinol-cytochrome c oxidoreductase (cytochrome b-c1 complex, complex III, CIII), a multisubunit enzyme composed of 11 subunits. The complex is composed of 3 respiratory subunits cytochrome b, cytochrome c1 and Rieske protein UQCRFS1, 2 core protein subunits UQCRC1/QCR1 and UQCRC2/QCR2, and 6 low-molecular weight protein subunits UQCRH/QCR6, UQCRB/QCR7, UQCRQ/QCR8, UQCR10/QCR9, UQCR11/QCR10 and subunit 9, the cleavage product of Rieske protein UQCRFS1. The complex exists as an obligatory dimer and forms supercomplexes (SCs) in the inner mitochondrial membrane with NADH-ubiquinone oxidoreductase (complex I, CI) and cytochrome c oxidase (complex IV, CIV), resulting in different assemblies (supercomplex SCI(1)III(2)IV(1) and megacomplex MCI(2)III(2)IV(2)). Interacts with RAB5IF. Interacts with STMP1. In terms of tissue distribution, expressed in the head region and flagellum of epididymal sperm.

The protein resides in the mitochondrion inner membrane. Component of the ubiquinol-cytochrome c oxidoreductase, a multisubunit transmembrane complex that is part of the mitochondrial electron transport chain which drives oxidative phosphorylation. The respiratory chain contains 3 multisubunit complexes succinate dehydrogenase (complex II, CII), ubiquinol-cytochrome c oxidoreductase (cytochrome b-c1 complex, complex III, CIII) and cytochrome c oxidase (complex IV, CIV), that cooperate to transfer electrons derived from NADH and succinate to molecular oxygen, creating an electrochemical gradient over the inner membrane that drives transmembrane transport and the ATP synthase. The cytochrome b-c1 complex catalyzes electron transfer from ubiquinol to cytochrome c, linking this redox reaction to translocation of protons across the mitochondrial inner membrane, with protons being carried across the membrane as hydrogens on the quinol. In the process called Q cycle, 2 protons are consumed from the matrix, 4 protons are released into the intermembrane space and 2 electrons are passed to cytochrome c. The 2 core subunits UQCRC1/QCR1 and UQCRC2/QCR2 are homologous to the 2 mitochondrial-processing peptidase (MPP) subunits beta-MPP and alpha-MPP respectively, and they seem to have preserved their MPP processing properties. May be involved in the in situ processing of UQCRFS1 into the mature Rieske protein and its mitochondrial targeting sequence (MTS)/subunit 9 when incorporated into complex III. The protein is Cytochrome b-c1 complex subunit 2, mitochondrial (Uqcrc2) of Rattus norvegicus (Rat).